Here is a 401-residue protein sequence, read N- to C-terminus: MRRAPAAERLLELGFPPRCGRQEPPFPLGVTRGWGRWPIQKRREGARPVPFSERSQEDGRGPAARSSGTLWRIRTRLSLCRDPEPPPPLCLLRVSLLCALRAGGRGSRWGEDGARLLLLPPARAAGNGEAEPSGGPSYAGRMLESSGCKALKEGVLEKRSDGLLQLWKKKCCILTEEGLLLIPPKQLQHQQQQQQQQQQQQQQQPGQGPAEPSQPSGPAVASLEPPVKLKELHFSNMKTVDCVERKGKYMYFTVVMAEGKEIDFRCPQDQGWNAEITLQMVQYKNRQAILAVKSTRQKQQHLVQQQPPSQPQPQPQLQPQPQPQPQPQPQPQSQPQPQPQPKPQPQQLHPYPHPHPHPHSHPHSHPHPHPHPHPHQIPHPHPQPHSQPHGHRLLRSTSNSA.

Disordered stretches follow at residues 39–67 (IQKRREGARPVPFSERSQEDGRGPAARSS), 190–222 (QQQQQQQQQQQQQQQPGQGPAEPSQPSGPAVAS), and 293–401 (KSTR…SNSA). The region spanning 151–283 (LKEGVLEKRS…AEITLQMVQY (133 aa)) is the PH domain. Residues 190 to 204 (QQQQQQQQQQQQQQQ) show a composition bias toward low complexity. Residues 308-344 (PSQPQPQPQLQPQPQPQPQPQPQPQSQPQPQPQPKPQ) are compositionally biased toward pro residues. The 15 X 2 AA repeats of P-Q stretch occupies residues 311–346 (PQPQPQLQPQPQPQPQPQPQPQSQPQPQPQPKPQPQ). The span at 352–378 (PHPHPHPHSHPHSHPHPHPHPHPHQIP) shows a compositional bias: basic residues. Residues 352 to 389 (PHPHPHPHSHPHSHPHPHPHPHPHQIPHPHPQPHSQPH) are 14 X 2 AA repeats of P-H.

As to quaternary structure, interacts with RPL14, EIF3S7 and PABPC4. As to expression, widely expressed with highest levels in pancreas. Strongly expressed by benign melanocytic nevi, and progressively reduced expressed in primary and metastatic melanomas (at protein level).

The protein resides in the cytoplasm. It localises to the cytoplasmic vesicle. The protein localises to the nucleus. Its subcellular location is the nucleolus. In terms of biological role, seems to be involved in regulation of apoptosis. May be involved in detachment-mediated programmed cell death. May mediate apoptosis during neuronal development. May be involved in regulation of anti-apoptotic effects of IGF1. May be involved in translational regulation. This chain is Pleckstrin homology-like domain family A member 1 (PHLDA1), found in Homo sapiens (Human).